Here is a 309-residue protein sequence, read N- to C-terminus: Homoserine O-succinyltransferase (309 aa).

Cysteine 142 acts as the Acyl-thioester intermediate in catalysis. Substrate is bound by residues lysine 163 and serine 192. Catalysis depends on histidine 235, which acts as the Proton acceptor. Glutamate 237 is a catalytic residue. Residue arginine 249 participates in substrate binding.

This sequence belongs to the MetA family.

The protein resides in the cytoplasm. It carries out the reaction L-homoserine + succinyl-CoA = O-succinyl-L-homoserine + CoA. It functions in the pathway amino-acid biosynthesis; L-methionine biosynthesis via de novo pathway; O-succinyl-L-homoserine from L-homoserine: step 1/1. In terms of biological role, transfers a succinyl group from succinyl-CoA to L-homoserine, forming succinyl-L-homoserine. This Pectobacterium carotovorum subsp. carotovorum (strain PC1) protein is Homoserine O-succinyltransferase.